Consider the following 319-residue polypeptide: tRNA-modifying protein YgfZ (319 aa).

Tryptophan 27 and tryptophan 189 together coordinate folate.

This sequence belongs to the tRNA-modifying YgfZ family.

It localises to the cytoplasm. Its function is as follows. Folate-binding protein involved in regulating the level of ATP-DnaA and in the modification of some tRNAs. It is probably a key factor in regulatory networks that act via tRNA modification, such as initiation of chromosomal replication. In Buchnera aphidicola subsp. Schizaphis graminum (strain Sg), this protein is tRNA-modifying protein YgfZ.